We begin with the raw amino-acid sequence, 735 residues long: Probable ATP-dependent RNA helicase DHR2 (735 aa).

Polar residues predominate over residues 1-13 (MAANSNSRVASNH). Residues 1 to 29 (MAANSNSRVASNHTSKKQKVRRNIHPFTN) are disordered. The span at 14-24 (TSKKQKVRRNI) shows a compositional bias: basic residues. Residues 91 to 257 (MSYIESNPVT…FNNAPILFVE (167 aa)) enclose the Helicase ATP-binding domain. 104 to 111 (GETGSGKS) contacts ATP. A DEAH box motif is present at residues 203 to 206 (DEAH). One can recognise a Helicase C-terminal domain in the interval 262–456 (DVKQYYLKAP…SPVLMLKRYG (195 aa)).

Belongs to the DEAD box helicase family. DEAH subfamily. Interacts with NOP19. Interacts with UBP10.

It localises to the nucleus. The protein resides in the nucleolus. The enzyme catalyses ATP + H2O = ADP + phosphate + H(+). In terms of biological role, probable ATP-binding RNA helicase. Required for 18S rRNA synthesis. The protein is Probable ATP-dependent RNA helicase DHR2 (DHR2) of Saccharomyces cerevisiae (strain ATCC 204508 / S288c) (Baker's yeast).